The sequence spans 506 residues: Sodium transporter HKT1 (506 aa).

Residues 1–19 are Cytoplasmic-facing; sequence MDRVVAKIAKIRSQLTKLR. The helical transmembrane segment at 20–40 threads the bilayer; it reads SLFFLYFIYFLFFSFLGFLAL. The Extracellular portion of the chain corresponds to 41 to 81; that stretch reads KITKPRTTSRPHDFDLFFTSVSAITVSSMSTVDMEVFSNTQ. The chain crosses the membrane as a helical span at residues 82-102; it reads LIFLTILMFLGGEIFTSFLNL. The Cytoplasmic segment spans residues 103–159; it reads YVSYFTKFVFPHNKIRHILGSYNSDSSIEDRCDVETVTDYREGLIKIDERASKCLYS. Residues 160 to 180 form a helical membrane-spanning segment; it reads VVLSYHLVTNLVGSVLLLVYV. Topologically, residues 181–232 are extracellular; the sequence is NFVKTARDVLSSKEISPLTFSVFTTVSTFANCGFVPTNENMIIFRKNSGLIW. Residues 233–253 form a helical membrane-spanning segment; that stretch reads LLIPQVLMGNTLFPCFLVLLI. Topologically, residues 254–286 are cytoplasmic; the sequence is WGLYKITKRDEYGYILKNHNKMGYSHLLSVRLC. Residues 287 to 307 form a helical membrane-spanning segment; that stretch reads VLLGVTVLGFLIIQLLFFCAF. Residues 308–348 are Extracellular-facing; it reads EWTSESLEGMSSYEKLVGSLFQVVNSRHTGETIVDLSTLSP. Residues 349 to 369 form a helical membrane-spanning segment; sequence AILVLFILMMYLPPYTLFMPL. Residues 370–392 lie on the Cytoplasmic side of the membrane; sequence TEQKTIEKEGGDDDSENGKKVKK. The chain crosses the membrane as a helical span at residues 393–413; sequence SGLIVSQLSFLTICIFLISIT. The Extracellular portion of the chain corresponds to 414–465; the sequence is ERQNLQRDPINFNVLNITLEVISAYGNVGFTTGYSCERRVDISDGGCKDASY. A glycan (N-linked (GlcNAc...) asparagine) is linked at asparagine 429. The chain crosses the membrane as a helical span at residues 466-486; sequence GFAGRWSPMGKFVLIIVMFYG. Over 487–506 the chain is Cytoplasmic; it reads RFKQFTAKSGRAWILYPSSS.

Belongs to the TrkH potassium transport family. HKT (TC 2.A.38.3) subfamily. Post-translationally, N-glycosylated. Not essential for functional expression and membrane targeting. Highly expressed in roots. Expressed in flowers, leaves and stems. Expressed in the vascular tissues of every organs. In roots, leaves and flower peduncles, it is only expressed in the phloem tissues. Not expressed in root peripheral cells.

The protein resides in the cell membrane. The catalysed reaction is Na(+)(in) = Na(+)(out). Its function is as follows. Sodium transporter protein, which plays a central role in plant tolerance to salt. Upon prolongated exposure to high concentrations, Na(+) translocates from the roots to the transpiring leaves where it can increase to toxic level. Involved in Na(+) recirculation from shoots to roots, probably by mediating Na(+) loading into the phloem sap in shoots and unloading in roots, thereby removing large amounts of Na(+) from the shoot. Does not transport K(+) but regulates K(+) nutrient status via its ability to facilitate Na(+) homeostasis. Probably not involved in root uptake of Na(+). This is Sodium transporter HKT1 (HKT1) from Arabidopsis thaliana (Mouse-ear cress).